A 642-amino-acid chain; its full sequence is Threonine--tRNA ligase (642 aa).

The TGS domain occupies 1–61; sequence MPVITLPDGS…ESDAQLAIIT (61 aa). The tract at residues 243–534 is catalytic; it reads DHRKIGKQLD…LTEEYAGFYP (292 aa). Zn(2+) is bound by residues Cys334, His385, and His511.

Belongs to the class-II aminoacyl-tRNA synthetase family. In terms of assembly, homodimer. The cofactor is Zn(2+).

The protein resides in the cytoplasm. The catalysed reaction is tRNA(Thr) + L-threonine + ATP = L-threonyl-tRNA(Thr) + AMP + diphosphate + H(+). Functionally, catalyzes the attachment of threonine to tRNA(Thr) in a two-step reaction: L-threonine is first activated by ATP to form Thr-AMP and then transferred to the acceptor end of tRNA(Thr). Also edits incorrectly charged L-seryl-tRNA(Thr). This Serratia proteamaculans (strain 568) protein is Threonine--tRNA ligase.